A 783-amino-acid polypeptide reads, in one-letter code: E3 UFM1-protein ligase 1 homolog (783 aa).

The segment at 406 to 476 (TLGTTHDADE…DAVQQSANSS (71 aa)) is disordered. Basic residues predominate over residues 446–457 (KSTKKHQRGRAA).

It belongs to the UFL1 family.

Its function is as follows. E3 UFM1-protein ligase that mediates ufmylation of target proteins. The protein is E3 UFM1-protein ligase 1 homolog of Drosophila grimshawi (Hawaiian fruit fly).